Reading from the N-terminus, the 82-residue chain is T-complex protein 1 subunit gamma (82 aa).

Residue glycine 15 participates in ADP binding. Position 15 (glycine 15) interacts with ATP. Aspartate 66 serves as a coordination point for Mg(2+). ADP contacts are provided by glycine 67, threonine 68, threonine 69, and serine 70. 3 residues coordinate ATP: glycine 67, threonine 68, and threonine 69.

Belongs to the TCP-1 chaperonin family. Component of the chaperonin-containing T-complex (TRiC), a hexadecamer composed of two identical back-to-back stacked rings enclosing a protein folding chamber. Each ring is made up of eight different subunits: TCP1/CCT1, CCT2, CCT3, CCT4, CCT5, CCT6A/CCT6, CCT7, CCT8. Interacts with PACRG. Interacts with DNAAF4. Interacts with DLEC1.

The protein resides in the cytoplasm. The catalysed reaction is ATP + H2O = ADP + phosphate + H(+). Component of the chaperonin-containing T-complex (TRiC), a molecular chaperone complex that assists the folding of actin, tubulin and other proteins upon ATP hydrolysis. The TRiC complex mediates the folding of WRAP53/TCAB1, thereby regulating telomere maintenance. As part of the TRiC complex may play a role in the assembly of BBSome, a complex involved in ciliogenesis regulating transports vesicles to the cilia. The chain is T-complex protein 1 subunit gamma (CCT3) from Sus scrofa (Pig).